The sequence spans 1978 residues: MAARVLAPPGPDSFKPFTPESLANIERRIAESKLKKPPKADGSHREDDEDSKPKPNSDLEAGKSLPFIYGDIPQGLVAVPLEDFDPYYLTQKTFVVLNRGKTLFRFSATPALYILSPFNLIRRIAIKILIHSVFSMIIMCTILTNCVFMTFSNPPEWSKNVEYTFTGIYTFESLVKIIARGFCIDGFTFLRDPWNWLDFSVIMMAYVTEFVDLGNVSALRTFRVLRALKTISVIPGLKTIVGALIQSVKKLSDVMILTVFCLSVFALIGLQLFMGNLRNKCVVWPINFNESYLENGTRGFDWEEYINNKTNFYMVPGMLEPLLCGNSSDAGQCPEGFQCMKAGRNPNYGYTSFDTFSWAFLALFRLMTQDYWENLYQLTLRAAGKTYMIFFVLVIFVGSFYLVNLILAVVAMAYEEQNQATLEEAEQKEAEFKAMLEQLKKQQEEAQAAAMATSAGTVSEDAIEEEGEDGVGSPRSSSELSKLSSKSAKERRNRRKKRKQKELSEGEEKGDPEKVFKSESEDGMRRKAFRLPDNRIGRKFSIMNQSLLSIPGSPFLSRHNSKSSIFSFRGPGRFRDPGSENEFADDEHSTVEESEGRRDSLFIPIRARERRSSYSGYSGYSQCSRSSRIFPSLRRSVKRNSTVDCNGVVSLIGPGSHIGRLLPEATTEVEIKKKGPGSLLVSMEQLASYGRKDRINSIMSVVTNTLVEELEESQRKCPPCWYKFANTFLIWECHPYWIKLKEIVNLIVMDPFVDLAITICIVLNTLFMAMEHHPMTPQFEHVLAVGNLVFTGIFTAEMFLKLIAMDPYYYFQEGWNIFDGFIVSLSLMELGLADVEGLSVLRSFRLLRVFKLAKSWPTLNMLIKIIGNSVGALGNLTLVLAIIVFIFAVVGMQLFGKSYKECVCKISQECKLPRWHMNDFFHSFLIVFRVLCGEWIETMWDCMEVAGQAMCLIVFMMVMVIGNLVVLNLFLALLLSSFSADNLAATDDDGEMNNLQISVIRIKKGVAWAKVKVHAFMQAHFKQREADEVKPLDELYEKKANCIANHTGVDIHRNGDFQKNGNGTTSGIGSSVEKYIIDEDHMSFINNPNLTVRVPIAVGESDFENLNTEDVSSESDPEGSKDKLDDTSSSEGSTIDIKPEVEEVPVEQPEEYLDPDACFTEGCVQRFKCCQVNIEEGLGKSWWILRKTCFLIVEHNWFETFIIFMILLSSGALAFEDIYIEQRKTIRTILEYADKVFTYIFILEMLLKWTAYGFVKFFTNAWCWLDFLIVAVSLVSLIANALGYSELGAIKSLRTLRALRPLRALSRFEGMRVVVNALVGAIPSIMNVLLVCLIFWLIFSIMGVNLFAGKYHYCFNETSEIRFEIDEVNNKTDCEKLMEGNNTEIRWKNVKINFDNVGAGYLALLQVATFKGWMDIMYAAVDSRKPDEQPDYEGNIYMYIYFVIFIIFGSFFTLNLFIGVIIDNFNQQKKKFGGQDIFMTEEQKKYYNAMKKLGSKKPQKPIPRPLNKIQGIVFDFVTQQAFDIVIMMLICLNMVTMMVETDTQSKQMENILYWINLVFVIFFTCECVLKMFALRHYYFTIGWNIFDFVVVILSIVGMFLADIIEKYFVSPTLFRVIRLARIGRILRLIKGAKGIRTLLFALMMSLPALFNIGLLLFLVMFIFSIFGMSNFAYVKHEAGIDDMFNFETFGNSMICLFQITTSAGWDGLLLPILNRPPDCSLDKEHPGSGFKGDCGNPSVGIFFFVSYIIISFLIVVNMYIAIILENFSVATEESADPLSEDDFETFYEIWEKFDPDATQFIEYCKLADFADALEHPLRVPKPNTIELIAMDLPMVSGDRIHCLDILFAFTKRVLGDSGELDILRQQMEERFVASNPSKVSYEPITTTLRRKQEEVSAVVLQRAYRGHLARRGFICRKITSNKLENGGTHREKKESTPSTASLPSYDSVTKPDKEKQQRAEEGRRERAKRQKEVRESKC.

Disordered stretches follow at residues 1 to 20 (MAAR…FTPE) and 28 to 62 (RIAE…LEAG). Residues 1–132 (MAARVLAPPG…RIAIKILIHS (132 aa)) lie on the Cytoplasmic side of the membrane. Residues 28-61 (RIAESKLKKPPKADGSHREDDEDSKPKPNSDLEA) show a composition bias toward basic and acidic residues. The stretch at 114-442 (ILSPFNLIRR…KAMLEQLKKQ (329 aa)) is one I repeat. Residues 133–151 (VFSMIIMCTILTNCVFMTF) traverse the membrane as a helical segment. Over 152 to 158 (SNPPEWS) the chain is Extracellular. A helical membrane pass occupies residues 159 to 179 (KNVEYTFTGIYTFESLVKIIA). Residues 180-193 (RGFCIDGFTFLRDP) are Cytoplasmic-facing. Residues 194 to 211 (WNWLDFSVIMMAYVTEFV) form a helical membrane-spanning segment. Residues 212–217 (DLGNVS) lie on the Extracellular side of the membrane. Residue Asn215 is glycosylated (N-linked (GlcNAc...) asparagine). Residues 218–234 (ALRTFRVLRALKTISVI) form a helical membrane-spanning segment. Over 235–253 (PGLKTIVGALIQSVKKLSD) the chain is Cytoplasmic. The chain crosses the membrane as a helical span at residues 254–273 (VMILTVFCLSVFALIGLQLF). The Extracellular segment spans residues 274–355 (MGNLRNKCVV…PNYGYTSFDT (82 aa)). Cys281 and Cys333 are oxidised to a cystine. N-linked (GlcNAc...) asparagine glycosylation is found at Asn289, Asn295, Asn308, and Asn326. Positions 356–380 (FSWAFLALFRLMTQDYWENLYQLTL) form an intramembrane region, pore-forming. Na(+) is bound at residue Glu373. At 381 to 387 (RAAGKTY) the chain is on the extracellular side. The chain crosses the membrane as a helical span at residues 388–408 (MIFFVLVIFVGSFYLVNLILA). At 409–751 (VVAMAYEEQN…EIVNLIVMDP (343 aa)) the chain is on the cytoplasmic side. Disordered stretches follow at residues 446–530 (AQAA…KAFR) and 576–597 (DPGS…SEGR). The segment covering 473–486 (SPRSSSELSKLSSK) has biased composition (low complexity). Positions 489–500 (KERRNRRKKRKQ) are enriched in basic residues. 2 stretches are compositionally biased toward basic and acidic residues: residues 501-530 (KELS…KAFR) and 586-597 (DEHSTVEESEGR). Phosphoserine occurs at positions 518 and 520. Residues 733-1005 (CHPYWIKLKE…QISVIRIKKG (273 aa)) form an II repeat. Residues 752–770 (FVDLAITICIVLNTLFMAM) form a helical membrane-spanning segment. Residues 771-781 (EHHPMTPQFEH) are Extracellular-facing. A helical transmembrane segment spans residues 782-801 (VLAVGNLVFTGIFTAEMFLK). Topologically, residues 802-815 (LIAMDPYYYFQEGW) are cytoplasmic. A helical transmembrane segment spans residues 816-835 (NIFDGFIVSLSLMELGLADV). The Extracellular segment spans residues 836-837 (EG). A helical membrane pass occupies residues 838-855 (LSVLRSFRLLRVFKLAKS). Residues 856–871 (WPTLNMLIKIIGNSVG) lie on the Cytoplasmic side of the membrane. Residues 872 to 890 (ALGNLTLVLAIIVFIFAVV) form a helical membrane-spanning segment. Over 891-919 (GMQLFGKSYKECVCKISQECKLPRWHMND) the chain is Extracellular. Cys904 and Cys910 form a disulfide bridge. Residues 920 to 940 (FFHSFLIVFRVLCGEWIETMW) constitute an intramembrane region (pore-forming). The Na(+) site is built by Glu934 and Glu937. Residues 941–953 (DCMEVAGQAMCLI) are Extracellular-facing. Cysteines 942 and 951 form a disulfide. A helical membrane pass occupies residues 954-974 (VFMMVMVIGNLVVLNLFLALL). Over 975-1197 (LSSFSADNLA…TCFLIVEHNW (223 aa)) the chain is Cytoplasmic. Positions 1105–1146 (NLNTEDVSSESDPEGSKDKLDDTSSSEGSTIDIKPEVEEVPV) are disordered. An III repeat occupies 1178-1493 (LGKSWWILRK…KKYYNAMKKL (316 aa)). Residues 1198–1215 (FETFIIFMILLSSGALAF) traverse the membrane as a helical segment. Over 1216-1228 (EDIYIEQRKTIRT) the chain is Extracellular. The chain crosses the membrane as a helical span at residues 1229–1247 (ILEYADKVFTYIFILEMLL). Over 1248–1261 (KWTAYGFVKFFTNA) the chain is Cytoplasmic. The helical transmembrane segment at 1262–1280 (WCWLDFLIVAVSLVSLIAN) threads the bilayer. At 1281-1288 (ALGYSELG) the chain is on the extracellular side. A helical membrane pass occupies residues 1289–1307 (AIKSLRTLRALRPLRALSR). Over 1308-1324 (FEGMRVVVNALVGAIPS) the chain is Cytoplasmic. The helical transmembrane segment at 1325–1344 (IMNVLLVCLIFWLIFSIMGV) threads the bilayer. Topologically, residues 1345 to 1397 (NLFAGKYHYCFNETSEIRFEIDEVNNKTDCEKLMEGNNTEIRWKNVKINFDNV) are extracellular. Cys1354 and Cys1374 are joined by a disulfide. Asn1356, Asn1370, and Asn1381 each carry an N-linked (GlcNAc...) asparagine glycan. Positions 1398-1419 (GAGYLALLQVATFKGWMDIMYA) form an intramembrane region, pore-forming. At 1420-1436 (AVDSRKPDEQPDYEGNI) the chain is on the extracellular side. A helical transmembrane segment spans residues 1437 to 1458 (YMYIYFVIFIIFGSFFTLNLFI). Over 1459–1521 (GVIIDNFNQQ…IVFDFVTQQA (63 aa)) the chain is Cytoplasmic. Residue Ser1495 is modified to Phosphoserine; by PKC. An IV repeat occupies 1502-1799 (IPRPLNKIQG…WEKFDPDATQ (298 aa)). Residues 1522–1539 (FDIVIMMLICLNMVTMMV) traverse the membrane as a helical segment. Residues 1540-1550 (ETDTQSKQMEN) lie on the Extracellular side of the membrane. Residues 1551 to 1569 (ILYWINLVFVIFFTCECVL) form a helical membrane-spanning segment. Topologically, residues 1570–1581 (KMFALRHYYFTI) are cytoplasmic. The helical transmembrane segment at 1582–1599 (GWNIFDFVVVILSIVGMF) threads the bilayer. Over 1600-1612 (LADIIEKYFVSPT) the chain is Extracellular. Residues 1613–1629 (LFRVIRLARIGRILRLI) traverse the membrane as a helical segment. Residues 1630–1648 (KGAKGIRTLLFALMMSLPA) are Cytoplasmic-facing. The chain crosses the membrane as a helical span at residues 1649 to 1666 (LFNIGLLLFLVMFIFSIF). The Extracellular portion of the chain corresponds to 1667–1688 (GMSNFAYVKHEAGIDDMFNFET). An intramembrane region (pore-forming) is located at residues 1689–1711 (FGNSMICLFQITTSAGWDGLLLP). Residues 1712–1740 (ILNRPPDCSLDKEHPGSGFKGDCGNPSVG) are Extracellular-facing. Cys1719 and Cys1734 are disulfide-bonded. A helical transmembrane segment spans residues 1741 to 1763 (IFFFVSYIIISFLIVVNMYIAII). The Cytoplasmic portion of the chain corresponds to 1764 to 1978 (LENFSVATEE…RQKEVRESKC (215 aa)). Residues 1893–1922 (EEVSAVVLQRAYRGHLARRGFICRKITSNK) form the IQ domain. A disordered region spans residues 1924-1978 (ENGGTHREKKESTPSTASLPSYDSVTKPDKEKQQRAEEGRRERAKRQKEVRESKC). The segment covering 1936–1947 (TPSTASLPSYDS) has biased composition (polar residues). Positions 1949-1978 (TKPDKEKQQRAEEGRRERAKRQKEVRESKC) are enriched in basic and acidic residues.

Belongs to the sodium channel (TC 1.A.1.10) family. Nav1.6/SCN8A subfamily. The voltage-sensitive sodium channel consists of an ion-conducting pore-forming alpha subunit regulated by one or more beta-1 (SCN1B), beta-2 (SCN2B), beta-3 (SCN3B) and/or beta-4 (SCN4B) subunits. Beta-1 (SCN1B) and beta-3 (SCN3B) are non-covalently associated with alpha, while beta-2 (SCN2B) and beta-4 (SCN4B) are covalently linked by disulfide bonds. Interacts with FGF13. Interacts with NEDD4 and NEDD4L. Interacts with FGF14, GBG3, GBB2 and SCN1B. Interacts with TMEM233. Interacts with the conotoxin GVIIJ. Interacts with the scorpion toxin BMK M1. Interacts with CALM1; the interaction modulates the inactivation rate of SCN8A. May be ubiquitinated by NEDD4L; which would promote its endocytosis. In terms of processing, phosphorylation at Ser-1495 by PKC in a highly conserved cytoplasmic loop slows inactivation of the sodium channel and reduces peak sodium currents. In terms of tissue distribution, expressed in the hippocampus (at protein level). Expressed in brain, cerebellum and spinal cord. Expressed in non-neuronal tissues, such as monocytes/macrophages.

It is found in the cell membrane. Its subcellular location is the cell projection. The protein resides in the axon. The protein localises to the cytoplasmic vesicle. It localises to the podosome. It carries out the reaction Na(+)(in) = Na(+)(out). In terms of biological role, pore-forming subunit of a voltage-gated sodium channel complex assuming opened or closed conformations in response to the voltage difference across membranes and through which sodium ions selectively pass along their electrochemical gradient. Contributes to neuronal excitability by regulating action potential threshold and propagation. Its function is as follows. More specifically expressed in non-neuronal cells, could play a role in sodium release from intracellular compartments and participate in the control of podosomes formation and macrophages adhesion and movement. This Mus musculus (Mouse) protein is Sodium channel protein type 8 subunit alpha.